A 284-amino-acid polypeptide reads, in one-letter code: Pantothenate synthetase (284 aa).

31–38 (MGNLHAGH) serves as a coordination point for ATP. The active-site Proton donor is the histidine 38. Residue glutamine 62 participates in (R)-pantoate binding. Glutamine 62 is a binding site for beta-alanine. An ATP-binding site is contributed by 150–153 (GKKD). Glutamine 156 is a binding site for (R)-pantoate. Residues valine 179 and 187–190 (MSSR) each bind ATP.

It belongs to the pantothenate synthetase family. In terms of assembly, homodimer.

Its subcellular location is the cytoplasm. It carries out the reaction (R)-pantoate + beta-alanine + ATP = (R)-pantothenate + AMP + diphosphate + H(+). The protein operates within cofactor biosynthesis; (R)-pantothenate biosynthesis; (R)-pantothenate from (R)-pantoate and beta-alanine: step 1/1. Its function is as follows. Catalyzes the condensation of pantoate with beta-alanine in an ATP-dependent reaction via a pantoyl-adenylate intermediate. The protein is Pantothenate synthetase of Xanthomonas campestris pv. campestris (strain 8004).